Reading from the N-terminus, the 288-residue chain is Proteasome assembly chaperone 1 (288 aa).

Alanine 2 is subject to N-acetylalanine. The interval 12–38 (TPCRAGTEEEEEEEDGNRETPEDREVR) is disordered. Position 18 is a phosphothreonine (threonine 18). A compositionally biased stretch (basic and acidic residues) spans 28 to 38 (NRETPEDREVR). Phosphothreonine is present on threonine 54. Residue serine 180 is modified to Phosphoserine. Lysine 264 is subject to N6-acetyllysine.

The protein belongs to the PSMG1 family. Forms a heterodimer with PSMG2. The PSMG1-PSMG2 heterodimer interacts directly with the PSMA5 and PSMA7 proteasome alpha subunits. Degraded by the proteasome upon completion of 20S proteasome maturation.

Its subcellular location is the cytoplasm. The protein localises to the endoplasmic reticulum. Functionally, chaperone protein which promotes assembly of the 20S proteasome as part of a heterodimer with PSMG2. The PSMG1-PSMG2 heterodimer binds to the PSMA5 and PSMA7 proteasome subunits, promotes assembly of the proteasome alpha subunits into the heteroheptameric alpha ring and prevents alpha ring dimerization. The chain is Proteasome assembly chaperone 1 from Bos taurus (Bovine).